The chain runs to 646 residues: FAD-binding monooxygenase prhK (646 aa).

N-linked (GlcNAc...) asparagine glycosylation is present at Asn-46. A helical membrane pass occupies residues 80–97; that stretch reads IIIIGAGFGGLLFAVRLI. FAD-binding positions include 119-122, 131-132, and Tyr-137; these read TWYW and DT. 129 to 131 is an NADP(+) binding site; sequence MCD. Residues 275–281 and 298–299 each bind NADP(+); these read TGATAIQ and RT. 3 N-linked (GlcNAc...) asparagine glycosylation sites follow: Asn-429, Asn-483, and Asn-529.

The protein belongs to the FAD-binding monooxygenase family. FAD is required as a cofactor.

Its subcellular location is the membrane. The enzyme catalyses preaustinoid A + AH2 + O2 = preaustinoid A1 + A + H2O. Its pathway is secondary metabolite biosynthesis; terpenoid biosynthesis. In terms of biological role, FAD-binding monooxygenase; part of the gene cluster that mediates the biosynthesis of paraherquonin, a meroterpenoid with a unique, highly congested hexacyclic molecular architecture. The first step of the pathway is the synthesis of 3,5-dimethylorsellinic acid (DMOA) by the polyketide synthase prhL. Synthesis of DMOA is followed by farnesylation by the prenyltransferase prhE, methylesterification by the methyl-transferase prhM, epoxidation of the prenyl chain by the flavin-dependent monooxygenase prhF, and cyclization of the farnesyl moiety by the terpene cyclase prhH, to yield the tetracyclic intermediate, protoaustinoid A. The short chain dehydrogenase prhI then oxidizes the C-3 alcohol group of the terpene cyclase product to transform protoaustinoid A into protoaustinoid B. The FAD-binding monooxygenase prhJ catalyzes the oxidation of protoaustinoid B into preaustinoid A which is further oxidized into preaustinoid A1 by FAD-binding monooxygenase phrK. Finally, prhA leads to berkeleydione via the berkeleyone B intermediate. PrhA is a multifunctional dioxygenase that first desaturates at C5-C6 to form berkeleyone B, followed by rearrangement of the A/B-ring to form the cycloheptadiene moiety in berkeleydione. Berkeleydione serves as the key intermediate for the biosynthesis of paraherquonin as well as many other meroterpenoids. The cytochrome P450 monooxygenases prhB, prhD, and prhN, as well as the isomerase prhC, are probably involved in the late stage of paraherquonin biosynthesis, after the production of berkeleydione. Especially prhC might be a multifunctional enzyme that catalyzes the D-ring expansion via intramolecular methoxy rearrangement, as well as the hydrolysis of the expanded D-ring. The sequence is that of FAD-binding monooxygenase prhK from Penicillium brasilianum.